A 576-amino-acid polypeptide reads, in one-letter code: Vesicular glutamate transporter 1 (576 aa).

Residues 1-63 (MEFRKEEFKK…CTCFGLPRRY (63 aa)) lie on the Cytoplasmic side of the membrane. The helical transmembrane segment at 64–84 (IIAIMSGLGFCISFGIRCNLG) threads the bilayer. Topologically, residues 85–116 (VAIVSMVNNNTVYKGNKIVIEQAQFTWDPETV) are vesicular. N-linked (GlcNAc...) asparagine glycosylation is present at asparagine 93. Residues 117-137 (GMIHGSFFWGYIVTQIPGGYI) traverse the membrane as a helical segment. At 138 to 140 (CQK) the chain is on the cytoplasmic side. The chain crosses the membrane as a helical span at residues 141-161 (FAANRVFGFAIVATSTLNMLI). At 162–168 (PSAARVH) the chain is on the vesicular side. A helical membrane pass occupies residues 169 to 189 (FACVICVRILQGLVEGVTYPA). The Cytoplasmic segment spans residues 190–208 (CHGIWSKWAPPLERSRLAT). A helical transmembrane segment spans residues 209 to 229 (TAFCGSYAGAVVAMPLAGVLV). Residues 230–236 (QYSGWSS) are Vesicular-facing. Residues 237 to 257 (VFYVYGSFGIMWYMFWILVSY) form a helical membrane-spanning segment. The Cytoplasmic segment spans residues 258 to 302 (ESPAIHPTISEEEKKYIEESIGESTGLMNPMAKFKAPWRKFFTSM). A helical transmembrane segment spans residues 303–323 (PVYAIIVANFCRSWTFYLLLI). Topologically, residues 324–341 (SQPAYFEEVFGFEISKVG) are vesicular. The helical transmembrane segment at 342 to 362 (LLSALPHLVMTIIVPIGGQIA) threads the bilayer. The Cytoplasmic segment spans residues 363–378 (DFLRTKRIMSTTNVRK). The helical transmembrane segment at 379–399 (MMNCGGFGMEATLLLVVGYSH) threads the bilayer. At 400–401 (SR) the chain is on the vesicular side. Residues 402–422 (GVAISFLVLAVGFSGFAISGF) form a helical membrane-spanning segment. Over 423–435 (NVNHLDIAPRYAS) the chain is Cytoplasmic. Residues 436–456 (ILMGISNGVGTLSGMVCPLIV) traverse the membrane as a helical segment. The Vesicular segment spans residues 457–469 (GAMTKHKTREEWQ). A helical transmembrane segment spans residues 470-490 (YVFLIASLVHYGGVLFYGIFA). Topologically, residues 491–576 (SGEKQPWAEP…YGTVAERDLS (86 aa)) are cytoplasmic. The tract at residues 517 to 547 (ADESEEQSQAYGAYGSYGATQTTSQQNGGWT) is disordered. A compositionally biased stretch (polar residues) spans 534 to 545 (GATQTTSQQNGG).

It belongs to the major facilitator superfamily. Sodium/anion cotransporter family. VGLUT subfamily.

The protein localises to the cytoplasmic vesicle. The protein resides in the secretory vesicle. It is found in the synaptic vesicle membrane. It localises to the cell membrane. Its subcellular location is the synapse. The protein localises to the synaptosome. The catalysed reaction is L-glutamate(out) = L-glutamate(in). It carries out the reaction chloride(in) = chloride(out). The enzyme catalyses 3 Na(+)(out) + phosphate(out) = 3 Na(+)(in) + phosphate(in). It catalyses the reaction phosphate(in) = phosphate(out). The catalysed reaction is K(+)(in) + H(+)(out) = K(+)(out) + H(+)(in). Its activity is regulated as follows. Chloride channel activity is allosterically activated by lumenal H(+) and Cl(-) leading to synaptic vesicles acidification. The L-glutamate transport activity is allosterically activated by lumenal H(+) and Cl(-). The allosteric activation by H(+) efficiently prevents non-vesicular efflux across the plasma membrane, thereby restricting L-glutamate transport activity to acidic membranes such as synaptic vesicles. In terms of biological role, multifunctional transporter that transports L-glutamate as well as multiple ions such as chloride, proton, potassium, sodium and phosphate. At the synaptic vesicle membrane, mainly functions as an uniporter which transports preferentially L-glutamate but also phosphate from the cytoplasm into synaptic vesicles at presynaptic nerve terminals of excitatory neural cells. The L-glutamate or phosphate uniporter activity is electrogenic and is driven by the proton electrochemical gradient, mainly by the electrical gradient established by the vacuolar H(+)-ATPase across the synaptic vesicle membrane. In addition, functions as a chloride channel that allows a chloride permeation through the synaptic vesicle membrane that affects the proton electrochemical gradient and promotes synaptic vesicles acidification. Moreover, may function as a K(+)/H(+) antiport allowing to maintain the electrical gradient and to decrease chemical gradient and therefore sustain vesicular glutamate uptake. The vesicular K(+)/H(+) antiport activity is electroneutral. At the plasma membrane, following exocytosis, functions as a symporter of Na(+) and phosphate from the extracellular space to the cytoplasm allowing synaptic phosphate homeostasis regulation. The symporter activity is driven by an inside negative membrane potential and is electrogenic. Is necessary for synaptic signaling of visual-evoked responses from photoreceptors. The sequence is that of Vesicular glutamate transporter 1 from Xenopus tropicalis (Western clawed frog).